The primary structure comprises 1497 residues: Collagen alpha-1(XVII) chain (1497 aa).

Disordered regions lie at residues 1–154 (MDVT…PSTR) and 167–186 (GSRS…LPIP). Over 1–467 (MDVTKKNKRD…CGSCCSWWKW (467 aa)) the chain is Cytoplasmic. The segment at 1–566 (MDVTKKNKRD…MMEQENGNLR (566 aa)) is nonhelical region (NC16). Positions 9–19 (RDGTEVTERIV) are enriched in basic and acidic residues. 2 stretches are compositionally biased toward polar residues: residues 57 to 96 (LTHG…SPGS) and 169 to 183 (RSAS…SNTL). Residues 145–230 (RLQSASPSTR…WSSTLPAGSS (86 aa)) form a necessary for interaction with DST and for the recruitment of DST to hemidesmosome region. Residues 468–488 (LLGLLLTWLLLLGLLFGLIAL) traverse the membrane as a helical; Signal-anchor for type II membrane protein segment. The Extracellular portion of the chain corresponds to 489 to 1497 (AEEVRKLKAR…RRRRSIAVKP (1009 aa)). The residue at position 544 (serine 544) is a Phosphoserine; by CK2. Disordered stretches follow at residues 562 to 1011 (NGNL…SSSG), 1209 to 1234 (GLSF…VSGA), and 1261 to 1316 (SFIV…TGGG). The segment at 567 to 1482 (GSPGPKGDMG…KGEKGDKGDQ (916 aa)) is triple-helical region. The segment covering 590–602 (PGIPGPLGHPGPQ) has biased composition (pro residues). Low complexity-rich tracts occupy residues 604-635 (PKGQ…RGEA), 661-673 (PGSV…SGSP), 735-748 (EPGA…AGPD), and 774-796 (DPGK…PGRP). 3 stretches are compositionally biased toward pro residues: residues 820–841 (PGPP…PGPA), 858–881 (PPGP…PRGP), and 907–916 (PPGPPGPPGP). 2 stretches are compositionally biased toward low complexity: residues 936 to 946 (GFSTSGSSSFG) and 968 to 987 (PGVP…GSSS). 3 stretches are compositionally biased toward pro residues: residues 994 to 1004 (PPGPPGPPGPP), 1214 to 1228 (PGPP…PRGP), and 1266 to 1275 (PPGPPGPQGP). The span at 1289–1312 (SRGSSSSSHSSSVRRGSSYSSSMS) shows a compositional bias: low complexity. A glycan (N-linked (GlcNAc...) asparagine) is linked at asparagine 1421. The interval 1434–1497 (GAIQGPPGQK…RRRRSIAVKP (64 aa)) is disordered. Positions 1458 to 1469 (AGPPGHPGPPGP) are enriched in pro residues. Basic and acidic residues predominate over residues 1472 to 1481 (HKGEKGDKGD). The interval 1483 to 1497 (VYAGRRRRRSIAVKP) is nonhelical region (NC1). Basic residues predominate over residues 1486–1497 (GRRRRRSIAVKP).

As to quaternary structure, homotrimers of alpha 1(XVII)chains. Interacts (via cytoplasmic region) with ITGB4 (via cytoplasmic region). Interacts (via cytoplasmic region) with DST isoform 3 (via N-terminus). Interacts (via N-terminus) with PLEC. Interacts (via cytoplasmic region) with DSP. The intracellular/endo domain is disulfide-linked. Post-translationally, prolines at the third position of the tripeptide repeating unit (G-X-Y) are hydroxylated in some or all of the chains. In terms of processing, the ectodomain is shedded from the surface of keratinocytes resulting in a 120-kDa soluble form, also named as 120 kDa linear IgA disease antigen. The shedding is mediated by membrane-bound metalloproteases. This cleavage is inhibited by phosphorylation at Ser-544. Detected in skin. In the cornea, it is detected in the epithelial basement membrane, the epithelial cells, and at a lower level in stromal cells (at protein level). Stratified squamous epithelia. Found in hemidesmosomes. Expressed in cornea, oral mucosa, esophagus, intestine, kidney collecting ducts, ureter, bladder, urethra and thymus but is absent in lung, blood vessels, skeletal muscle and nerves.

It localises to the cell junction. The protein resides in the hemidesmosome. Its subcellular location is the membrane. It is found in the secreted. The protein localises to the extracellular space. It localises to the extracellular matrix. The protein resides in the basement membrane. Functionally, may play a role in the integrity of hemidesmosome and the attachment of basal keratinocytes to the underlying basement membrane. The 120 kDa linear IgA disease antigen is an anchoring filament component involved in dermal-epidermal cohesion. Is the target of linear IgA bullous dermatosis autoantibodies. The protein is Collagen alpha-1(XVII) chain (COL17A1) of Homo sapiens (Human).